Reading from the N-terminus, the 342-residue chain is Deoxyguanosinetriphosphate triphosphohydrolase-like protein (342 aa).

In terms of domain architecture, HD spans 75–190 (RLVHTLEVSQ…VRFADKIAYV (116 aa)).

It belongs to the dGTPase family. Type 2 subfamily.

The protein is Deoxyguanosinetriphosphate triphosphohydrolase-like protein of Clostridium perfringens (strain SM101 / Type A).